The primary structure comprises 140 residues: Thioredoxin M-type, chloroplastic (140 aa).

A chloroplast-targeting transit peptide spans 1 to 34 (MALVARRAAVPSARSSARPAFARAAPRRSVVVRA). The Thioredoxin domain maps to 35-140 (EAGAVNDDTF…IVQTVEKYLN (106 aa)). Residues Cys-64 and Cys-67 each act as nucleophile in the active site. An intrachain disulfide couples Cys-64 to Cys-67.

This sequence belongs to the thioredoxin family. Plant M-type subfamily. In terms of assembly, forms a complex with heterodimeric ferredoxin-thioredoxin reductase (FTR) and ferredoxin.

The protein localises to the plastid. Its subcellular location is the chloroplast. Participates in various redox reactions through the reversible oxidation of the active center dithiol to a disulfide. The M form is known to activate NADP-malate dehydrogenase. In Chlamydomonas reinhardtii (Chlamydomonas smithii), this protein is Thioredoxin M-type, chloroplastic (TRXM).